Reading from the N-terminus, the 600-residue chain is 69 kDa paraflagellar rod protein (600 aa).

The interval 335–355 is calmodulin-binding; the sequence is DKQDEAWRRIQELERVLQRLG.

Heterodimer of a 69 kDa and a 73 kDa protein.

It localises to the cell projection. It is found in the cilium. The protein resides in the flagellum. Its subcellular location is the cytoplasm. The protein localises to the cytoskeleton. In terms of biological role, major component of the paraflagellar rod (PFR). The PFR is a highly ordered lattices of fibrous proteins that are located inside the flagellum and assume a fixed orientation with respect to the microtubular axoneme. This chain is 69 kDa paraflagellar rod protein (PFRA), found in Trypanosoma brucei brucei.